Here is a 100-residue protein sequence, read N- to C-terminus: Urease subunit gamma (100 aa).

Belongs to the urease gamma subunit family. Heterotrimer of UreA (gamma), UreB (beta) and UreC (alpha) subunits. Three heterotrimers associate to form the active enzyme.

Its subcellular location is the cytoplasm. It catalyses the reaction urea + 2 H2O + H(+) = hydrogencarbonate + 2 NH4(+). The protein operates within nitrogen metabolism; urea degradation; CO(2) and NH(3) from urea (urease route): step 1/1. This is Urease subunit gamma from Yersinia rohdei.